The chain runs to 441 residues: MSKVTHQPKIGFVSLGCPKNLVDSERILTELRTEGYDVVPSYDDADMVIVNTCGFIDSAVQESLEAIGEALNENGKVIVTGCLGAKEDQIREVHPKVLEITGPHSYEQVLEHVHHYVPKPKHNPFLSLVPEQGVKLTPRHYAYLKISEGCNHRCTFCIIPSMRGDLVSRPIGDVLSEAKRLVDAGVKEILVISQDTSAYGVDVKHRTGFYNGEPVKTSMVSLCEQLSKLGIWTRLHYVYPYPHVDDVIPLMAEGKILPYLDIPLQHASPRILKLMKRPGSVDRQLARIKQWREICPELTLRSTFIVGFPGETEEDFQMLLDFLKEARLDRVGCFKYSPVEGADANALPDQVPEEVKEERWNRFMQLQQQISAERLQEKVGKEILVIIDEVDDEGAIGRSMADAPEIDGAVYLNGESNVKPGDIVRVKVEHADEYDLWGSRV.

The region spanning 8 to 118 (PKIGFVSLGC…VLEHVHHYVP (111 aa)) is the MTTase N-terminal domain. [4Fe-4S] cluster-binding residues include C17, C53, C82, C150, C154, and C157. The region spanning 136–373 (LTPRHYAYLK…MQLQQQISAE (238 aa)) is the Radical SAM core domain. The TRAM domain occupies 376–441 (QEKVGKEILV…DEYDLWGSRV (66 aa)).

This sequence belongs to the methylthiotransferase family. RimO subfamily. It depends on [4Fe-4S] cluster as a cofactor.

The protein resides in the cytoplasm. It carries out the reaction L-aspartate(89)-[ribosomal protein uS12]-hydrogen + (sulfur carrier)-SH + AH2 + 2 S-adenosyl-L-methionine = 3-methylsulfanyl-L-aspartate(89)-[ribosomal protein uS12]-hydrogen + (sulfur carrier)-H + 5'-deoxyadenosine + L-methionine + A + S-adenosyl-L-homocysteine + 2 H(+). Functionally, catalyzes the methylthiolation of an aspartic acid residue of ribosomal protein uS12. The chain is Ribosomal protein uS12 methylthiotransferase RimO from Escherichia fergusonii (strain ATCC 35469 / DSM 13698 / CCUG 18766 / IAM 14443 / JCM 21226 / LMG 7866 / NBRC 102419 / NCTC 12128 / CDC 0568-73).